The primary structure comprises 106 residues: Iron-sulfur cluster assembly protein CyaY (106 aa).

It belongs to the frataxin family.

Functionally, involved in iron-sulfur (Fe-S) cluster assembly. May act as a regulator of Fe-S biogenesis. The sequence is that of Iron-sulfur cluster assembly protein CyaY from Escherichia coli O127:H6 (strain E2348/69 / EPEC).